We begin with the raw amino-acid sequence, 637 residues long: Threonine--tRNA ligase (637 aa).

The TGS domain occupies 1-61; that stretch reads MLNITLPDCS…VEDSAVQIIT (61 aa). The catalytic stretch occupies residues 242–533; sequence DHRKLGKQLD…LIENHAGSFP (292 aa). The Zn(2+) site is built by Cys333, His384, and His510.

It belongs to the class-II aminoacyl-tRNA synthetase family. Homodimer. Zn(2+) is required as a cofactor.

The protein localises to the cytoplasm. It carries out the reaction tRNA(Thr) + L-threonine + ATP = L-threonyl-tRNA(Thr) + AMP + diphosphate + H(+). Its function is as follows. Catalyzes the attachment of threonine to tRNA(Thr) in a two-step reaction: L-threonine is first activated by ATP to form Thr-AMP and then transferred to the acceptor end of tRNA(Thr). Also edits incorrectly charged L-seryl-tRNA(Thr). This Neisseria gonorrhoeae (strain ATCC 700825 / FA 1090) protein is Threonine--tRNA ligase.